The sequence spans 466 residues: Gamma-aminobutyric acid receptor subunit gamma-2 (466 aa).

The N-terminal stretch at 1 to 38 (MSSPNTWSTGSTVYSPVFSQKMTLWILLLLSLYPGFTS) is a signal peptide. Over 39–274 (QKSDDDYEDY…FDLSRRMGYF (236 aa)) the chain is Extracellular. Residues N51 and N128 are each glycosylated (N-linked (GlcNAc...) asparagine). The cysteines at positions 189 and 203 are disulfide-linked. A glycan (N-linked (GlcNAc...) asparagine) is linked at N246. Residues 275 to 295 (TIQTYIPCTLIVVLSWVSFWI) traverse the membrane as a helical segment. At 296-301 (NKDAVP) the chain is on the cytoplasmic side. The helical transmembrane segment at 302–321 (ARTSLGITTVLTMTTLSTIA) threads the bilayer. Over 322-333 (RKSLPKVSYVTA) the chain is Extracellular. A helical transmembrane segment spans residues 334-358 (MDLFVSVCFIFVFSALVEYGTLHYF). The Cytoplasmic segment spans residues 359–442 (VSNRKPSKDK…IHIRIAKMDS (84 aa)). Residues 443 to 463 (YARIFFPTAFCLFNLVYWVSY) traverse the membrane as a helical segment. The Extracellular segment spans residues 464–466 (LYL).

The protein belongs to the ligand-gated ion channel (TC 1.A.9) family. Gamma-aminobutyric acid receptor (TC 1.A.9.5) subfamily. GABRG2 sub-subfamily. In terms of assembly, heteropentamer, formed by a combination of alpha (GABRA1-6), beta (GABRB1-3), gamma (GABRG1-3), delta (GABRD), epsilon (GABRE), rho (GABRR1-3), pi (GABRP) and theta (GABRQ) chains, each subunit exhibiting distinct physiological and pharmacological properties. Interacts with GABARAP. Interacts with KIF21B. Identified in a complex of 720 kDa composed of LHFPL4, NLGN2, GABRA1, GABRB2, GABRG2 and GABRB3. Interacts with LHFPL4. Interacts with SHISA7; interaction leads to the regulation of GABA(A) receptor trafficking, channel deactivation kinetics and pharmacology. Post-translationally, palmitoylated by ZDHHC3/GODZ; required for the accumulation of GABA(A) receptors at the postsynaptic membrane of inhibitory GABAergic synapses. Glycosylated. As to expression, expressed in brain (at protein level). Expressed in lungs, in alveolar epithelium.

It is found in the postsynaptic cell membrane. It localises to the cell membrane. The protein resides in the cell projection. Its subcellular location is the dendrite. The protein localises to the cytoplasmic vesicle membrane. The enzyme catalyses chloride(in) = chloride(out). Allosterically activated by benzodiazepines. Activated by pentobarbital. Inhibited by the antagonist bicuculline. Inhibited by zinc ions. Potentiated by histamine. Its function is as follows. Gamma subunit of the heteropentameric ligand-gated chloride channel gated by gamma-aminobutyric acid (GABA), a major inhibitory neurotransmitter in the brain. GABA-gated chloride channels, also named GABA(A) receptors (GABAAR), consist of five subunits arranged around a central pore and contain GABA active binding site(s) located at the alpha and beta subunit interface(s). When activated by GABA, GABAARs selectively allow the flow of chloride anions across the cell membrane down their electrochemical gradient. Gamma-2/GABRG2-containing GABAARs are found at both synaptic and extrasynaptic sites. Chloride influx into the postsynaptic neuron following GABAAR opening decreases the neuron ability to generate a new action potential, thereby reducing nerve transmission. GABAARs containing alpha-1 and beta-2 or -3 subunits exhibit synaptogenic activity; the gamma-2 subunit being necessary but not sufficient to induce rapid synaptic contacts formation. Extrasynaptic gamma-2-containing receptors contribute to the tonic GABAergic inhibition. GABAARs function also as histamine receptor where histamine binds at the interface of two neighboring beta subunits and potentiates GABA response in a gamma-2 subunit-controlled manner. This Rattus norvegicus (Rat) protein is Gamma-aminobutyric acid receptor subunit gamma-2.